The primary structure comprises 200 residues: MYCINTDCTYTKIAIEQLLHEKYFDDRRYCHSIKIYDLRFFKIEDVAYKLIQLFKERRKENIIFLCSDRFIHSKEKPRNIFFLDTKDSIRNWSRHLKKLRYCNSNLLICFLFLCGLYHISVFTGKKQVIIACIKKGFSFAEIVNFLNINARTLVNYLGGLTTYFILPYSDSLYKYIIDNIIASSTEEYHILLTNQRRYYV.

The helical transmembrane segment at 104–124 threads the bilayer; it reads SNLLICFLFLCGLYHISVFTG.

Its subcellular location is the membrane. This is an uncharacterized protein from Escherichia coli (strain K12).